The following is a 570-amino-acid chain: Serine/threonine-protein kinase flr-4 (570 aa).

One can recognise a Protein kinase domain in the interval Tyr40–Leu331. Residues Leu46 to Val54 and Lys67 contribute to the ATP site. Asp172 functions as the Proton acceptor in the catalytic mechanism. Residues Glu338 to Gly369 form a disordered region. Polar residues predominate over residues Pro346 to Asn361. The next 3 membrane-spanning stretches (helical) occupy residues Ile400–Ile420, Ile425–Ile445, and Leu471–Val491. The interval Val550–Asn570 is disordered.

The protein belongs to the protein kinase superfamily. Ser/Thr protein kinase family. In terms of tissue distribution, present in the intestinal cells from comma-stage embryos through the adult stage, although the intestinal expression is weaker after the L1 stage. Accumulates at the cell membrane of intestinal cells, especially the lateral membrane intervening the intestinal cells. Also detected in the muscles of the pharyngeal isthmus from the 3-fold embryonic stage, and in a pair of head neurons, which correspond to the AUA neurons, from the late L1 stage (at protein level).

It localises to the membrane. The catalysed reaction is L-seryl-[protein] + ATP = O-phospho-L-seryl-[protein] + ADP + H(+). The enzyme catalyses L-threonyl-[protein] + ATP = O-phospho-L-threonyl-[protein] + ADP + H(+). Functionally, probable serine-threonine protein kinase involved in the control of defecation rhythms. Required to increase the length of defecation cycle period. Acts in a cell-functional rather than developmental aspect in the regulation of defecation rhythms. Prevents preferential activation of the p38 MAPK pathway in response to the levels of vitamin B12 in different food types during larval development, thereby regulating the expression of cytoprotective genes, modulating life span and stress tolerance. The polypeptide is Serine/threonine-protein kinase flr-4 (flr-4) (Caenorhabditis elegans).